Consider the following 440-residue polypeptide: Microtubule-associated tumor suppressor 1 homolog A (440 aa).

The tract at residues Lys-44–Ser-67 is disordered. The stretch at Ser-69–Leu-401 forms a coiled coil. Residues Gly-407–Arg-440 are disordered. Over residues Pro-417–Phe-432 the composition is skewed to polar residues.

It belongs to the MTUS1 family. Homodimer.

It is found in the mitochondrion. The protein resides in the golgi apparatus. Its subcellular location is the cell membrane. The protein localises to the nucleus. Functionally, may inhibit cell proliferation. In Danio rerio (Zebrafish), this protein is Microtubule-associated tumor suppressor 1 homolog A (mtus1a).